Here is a 78-residue protein sequence, read N- to C-terminus: Dihydrofolate reductase type 2 (78 aa).

NADP(+) contacts are provided by residues Lys32 and Val66 to Tyr69. Residue Ile68 coordinates substrate.

In terms of assembly, homotetramer.

The enzyme catalyses (6S)-5,6,7,8-tetrahydrofolate + NADP(+) = 7,8-dihydrofolate + NADPH + H(+). It participates in cofactor biosynthesis; tetrahydrofolate biosynthesis; 5,6,7,8-tetrahydrofolate from 7,8-dihydrofolate: step 1/1. In terms of biological role, key enzyme in folate metabolism. Catalyzes an essential reaction for de novo glycine and purine synthesis, and for DNA precursor synthesis. This Escherichia coli protein is Dihydrofolate reductase type 2.